A 371-amino-acid chain; its full sequence is tRNA-specific 2-thiouridylase MnmA (371 aa).

ATP is bound by residues 12–19 (GMSGGVDS) and Met38. An interaction with target base in tRNA region spans residues 98–100 (NPD). The active-site Nucleophile is the Cys103. A disulfide bridge connects residues Cys103 and Cys200. Residue Gly128 participates in ATP binding. The interval 150–152 (KDQ) is interaction with tRNA. The active-site Cysteine persulfide intermediate is Cys200. The interval 312-313 (RY) is interaction with tRNA.

It belongs to the MnmA/TRMU family. As to quaternary structure, interacts with TusE.

The protein resides in the cytoplasm. The enzyme catalyses S-sulfanyl-L-cysteinyl-[protein] + uridine(34) in tRNA + AH2 + ATP = 2-thiouridine(34) in tRNA + L-cysteinyl-[protein] + A + AMP + diphosphate + H(+). Catalyzes the 2-thiolation of uridine at the wobble position (U34) of tRNA(Lys), tRNA(Glu) and tRNA(Gln), leading to the formation of s(2)U34, the first step of tRNA-mnm(5)s(2)U34 synthesis. Sulfur is provided by IscS, via a sulfur-relay system. Binds ATP and its substrate tRNAs. The polypeptide is tRNA-specific 2-thiouridylase MnmA (Yersinia pestis bv. Antiqua (strain Antiqua)).